We begin with the raw amino-acid sequence, 387 residues long: Oxidase FUB9 (387 aa).

Residues Met-1–Lys-20 form a disordered region. An FMN hydroxy acid dehydrogenase domain is found at Ser-18–Ala-379. A 2-oxocarboxylate is bound at residue Tyr-44. Positions 126, 150, and 178 each coordinate FMN. Arg-187 provides a ligand contact to a 2-oxocarboxylate. Position 250 (Lys-250) interacts with FMN. Catalysis depends on His-274, which acts as the Proton acceptor. Arg-277 provides a ligand contact to a 2-oxocarboxylate. FMN-binding positions include Asp-305–Arg-309 and Gly-328–Arg-329.

The protein belongs to the FMN-dependent alpha-hydroxy acid dehydrogenase family. Requires FMN as cofactor.

It participates in mycotoxin biosynthesis. Its function is as follows. Oxidase; part of the gene cluster that mediates the biosynthesis of fusaric acid, a mycotoxin with low to moderate toxicity to animals and humans, but with high phytotoxic properties. L-aspartate is suggested as fusaric acid amino acid precursor that is activated and further processed to O-acetyl-L-homoserine by cluster enzymes aspartate kinase FUB3 and homoserine O-acetyltransferase FUB5, as well as enzymes of the primary metabolism. The polyketide synthase (PKS) FUB1 generates the triketide trans-2-hexenal which is presumptively released by the hydrolase FUB4 and linked to the NRPS-bound amino acid precursor by NAD(P)-dependent dehydrogenase FUB6. FUB1, FUB4, and the non-canonical NRPS Fub8 may form an enzyme complex. Further processing of the NRPS-bound intermediate might be carried out by FUB6 and the sulfhydrylase FUB7, enabling a spontaneous electrocyclization to close the carbon backbone of fusaric acid. Dihydrofusaric acid is likely to be released via reduction by the thioester reductase (TR) domain of FUB8 whereupon the final oxidation to fusaric acid may (also) be performed by the FMN-dependent dehydrogenase FUB9. In Fusarium oxysporum f. sp. lycopersici (strain 4287 / CBS 123668 / FGSC 9935 / NRRL 34936) (Fusarium vascular wilt of tomato), this protein is Oxidase FUB9.